The primary structure comprises 78 residues: UPF0291 protein SE_1024 (78 aa).

The disordered stretch occupies residues 53 to 78; that stretch reads TKVIDPEGNDVTPEKLKKIQEEKHNK. Positions 64–78 are enriched in basic and acidic residues; that stretch reads TPEKLKKIQEEKHNK.

This sequence belongs to the UPF0291 family.

The protein localises to the cytoplasm. In Staphylococcus epidermidis (strain ATCC 12228 / FDA PCI 1200), this protein is UPF0291 protein SE_1024.